Consider the following 394-residue polypeptide: ATP phosphoribosyltransferase regulatory subunit (394 aa).

It belongs to the class-II aminoacyl-tRNA synthetase family. HisZ subfamily. Heteromultimer composed of HisG and HisZ subunits.

The protein localises to the cytoplasm. Its pathway is amino-acid biosynthesis; L-histidine biosynthesis; L-histidine from 5-phospho-alpha-D-ribose 1-diphosphate: step 1/9. Its function is as follows. Required for the first step of histidine biosynthesis. May allow the feedback regulation of ATP phosphoribosyltransferase activity by histidine. This Geobacillus thermodenitrificans (strain NG80-2) protein is ATP phosphoribosyltransferase regulatory subunit.